The sequence spans 1038 residues: Activated CDC42 kinase 1 (1038 aa).

An SAM-like domain region spans residues 1–110 (MQPEEGTGWL…TSPAPGGPAG (110 aa)). The interval 90–114 (PPHHSQSTFRKTSPAPGGPAGEGPL) is disordered. In terms of domain architecture, Protein kinase spans 126–385 (LRLLEKLGDG…PTFVALRDFL (260 aa)). ATP-binding positions include 132–140 (LGDGSFGVV) and Lys158. The active-site Proton acceptor is the Asp252. At Tyr284 the chain carries Phosphotyrosine; by SRC and autocatalysis. One can recognise an SH3 domain in the interval 388–448 (AQPTDMRALQ…PRNVVTSVAG (61 aa)). Positions 454–466 (ISQPLQNSFIHTG) constitute a CRIB domain. The segment at 497-535 (LSVELSTSRPPQHLGGVKKPTYDPVSEDQDPLSSDFKRL) is disordered. Tyr518 bears the Phosphotyrosine mark. Positions 623-652 (DWDARPLPPPPAYDDVAQDEDDFEICSINS) are required for interaction with SRC. The segment at 632–635 (PPAY) is required for interaction with NEDD4. Disordered regions lie at residues 659-702 (VPAG…SSAQ) and 718-840 (LQAP…GPRA). Ser724 carries the phosphoserine modification. Positions 733 to 876 (GDDKPQVPPR…SYLERYQRFL (144 aa)) are EBD domain. 3 stretches are compositionally biased toward pro residues: residues 738–749 (QVPPRVPIPPRP), 772–783 (PASPPRVPPREP), and 794–805 (PLVPPGSSPLPP). The residue at position 827 (Tyr827) is a Phosphotyrosine. An Omega-N-methylarginine modification is found at Arg839. Tyr859 and Tyr872 each carry phosphotyrosine. Ser881 is modified (phosphoserine). Residues 917 to 957 (LDPKANFSTNNSNPGARPPPPRATARLPQRGCPGDGPEAGR) are disordered. One can recognise a UBA domain in the interval 958 to 996 (PADKIQMAMVHGVTTEECQAALQCHGWSVQRAAQYLKVE).

It belongs to the protein kinase superfamily. Tyr protein kinase family. In terms of assembly, interacts with NEDD4 (via WW3 domain). NEDD4L and EGF promote association with NEDD4. Homodimer. Interacts with AR, CDC42, WWASL and WWOX. Interacts with CSPG4 (activated). Interacts with MERTK (activated); stimulates autophosphorylation. May interact (phosphorylated) with HSP90AB1; maintains kinase activity. Interacts with NPHP1. Interacts with SNX9 (via SH3 domain). Interacts with SRC (via SH2 and SH3 domain). Interacts with EGFR, and this interaction is dependent on EGF stimulation and kinase activity of EGFR. Interacts (via kinase domain) with AKT1. Part of a collagen stimulated complex involved in cell migration composed of CDC42, CRK, TNK2 and BCAR1/p130cas. Interacts with BCAR1/p130cas via SH3 domains. Forms complexes with GRB2 and numerous receptor tyrosine kinases (RTK) including LTK, AXL or PDGFRL, in which GRB2 promotes RTK recruitment by TNK2. The cofactor is Mg(2+). Post-translationally, autophosphorylation regulates kinase activity. Phosphorylation on Tyr-518 is required for interaction with SRC and is observed during association with clathrin-coated pits. In terms of processing, polyubiquitinated by NEDD4 and NEDD4L. Degradation can be induced by EGF and is lysosome-dependent. In terms of tissue distribution, the Tyr-284 phosphorylated form shows a significant increase in expression in breast cancers during the progressive stages i.e. normal to hyperplasia (ADH), ductal carcinoma in situ (DCIS), invasive ductal carcinoma (IDC) and lymph node metastatic (LNMM) stages. It also shows a significant increase in expression in prostate cancers during the progressive stages.

The protein localises to the cell membrane. Its subcellular location is the nucleus. It is found in the endosome. It localises to the cell junction. The protein resides in the adherens junction. The protein localises to the cytoplasmic vesicle membrane. Its subcellular location is the cytoplasmic vesicle. It is found in the clathrin-coated vesicle. It localises to the membrane. The protein resides in the clathrin-coated pit. The protein localises to the cytoplasm. Its subcellular location is the perinuclear region. It is found in the cytosol. The catalysed reaction is L-tyrosyl-[protein] + ATP = O-phospho-L-tyrosyl-[protein] + ADP + H(+). It carries out the reaction L-seryl-[protein] + ATP = O-phospho-L-seryl-[protein] + ADP + H(+). It catalyses the reaction L-threonyl-[protein] + ATP = O-phospho-L-threonyl-[protein] + ADP + H(+). With respect to regulation, inhibited by AIM-100 (4-amino-5,6-biaryl-furo[2,3-d]pyrimidine), which suppresses activating phosphorylation at Tyr-284. Repressed by dasatinib. Its function is as follows. Non-receptor tyrosine-protein and serine/threonine-protein kinase that is implicated in cell spreading and migration, cell survival, cell growth and proliferation. Transduces extracellular signals to cytosolic and nuclear effectors. Phosphorylates AKT1, AR, MCF2, WASL and WWOX. Implicated in trafficking and clathrin-mediated endocytosis through binding to epidermal growth factor receptor (EGFR) and clathrin. Binds to both poly- and mono-ubiquitin and regulates ligand-induced degradation of EGFR, thereby contributing to the accumulation of EGFR at the limiting membrane of early endosomes. Downstream effector of CDC42 which mediates CDC42-dependent cell migration via phosphorylation of BCAR1. May be involved both in adult synaptic function and plasticity and in brain development. Activates AKT1 by phosphorylating it on 'Tyr-176'. Phosphorylates AR on 'Tyr-267' and 'Tyr-363' thereby promoting its recruitment to androgen-responsive enhancers (AREs). Phosphorylates WWOX on 'Tyr-287'. Phosphorylates MCF2, thereby enhancing its activity as a guanine nucleotide exchange factor (GEF) toward Rho family proteins. Contributes to the control of AXL receptor levels. Confers metastatic properties on cancer cells and promotes tumor growth by negatively regulating tumor suppressor such as WWOX and positively regulating pro-survival factors such as AKT1 and AR. Phosphorylates WASP. The chain is Activated CDC42 kinase 1 (TNK2) from Homo sapiens (Human).